A 903-amino-acid polypeptide reads, in one-letter code: Centrobin (903 aa).

The segment covering 1–10 (MATSADSPSS) has biased composition (polar residues). Residues 1 to 34 (MATSADSPSSPLGAEDLLSDSSEPPGLNQVSSEV) form a disordered region. The residue at position 80 (Ser-80) is a Phosphoserine. Disordered stretches follow at residues 110–140 (LQTS…DSDS), 471–493 (LRQA…GQHQ), 568–597 (LSTT…KEER), 669–704 (SALG…LPPA), 772–799 (RVPE…DGLT), and 837–903 (SGTD…GVWR). Positions 196–560 (RRKHCERHIQ…ERLQAMLQAH (365 aa)) form a coiled coil. Residues 365 to 903 (QEHQLKEHYQ…SMRSRGGVWR (539 aa)) form a required for centrosome localization region. Residues 572–590 (LPPPNPPAPPAGPSSPGPQ) are compositionally biased toward pro residues. The segment covering 675–685 (HPDHRAERPFP) has biased composition (basic and acidic residues). Residues 778 to 791 (SSHSQGSGPSSGSP) show a composition bias toward low complexity. A Phosphoserine modification is found at Ser-790. The span at 837 to 863 (SGTDGRGDNVPRRNTDSRLGEIPRKEI) shows a compositional bias: basic and acidic residues.

As to quaternary structure, interacts with LYST. As to expression, widely expressed (at protein level). Highly expressed in testis. Also expressed in spleen, thymus, prostate, small intestine, colon and peripheral blood leukocytes.

The protein resides in the cytoplasm. The protein localises to the cytoskeleton. It is found in the microtubule organizing center. Its subcellular location is the centrosome. It localises to the centriole. Its function is as follows. Required for centriole duplication. Inhibition of centriole duplication leading to defects in cytokinesis. This Homo sapiens (Human) protein is Centrobin (CNTROB).